A 448-amino-acid polypeptide reads, in one-letter code: Glucose-6-phosphate isomerase (448 aa).

Residue Glu290 is the Proton donor of the active site. Active-site residues include His311 and Lys425.

The protein belongs to the GPI family.

It is found in the cytoplasm. It carries out the reaction alpha-D-glucose 6-phosphate = beta-D-fructose 6-phosphate. The protein operates within carbohydrate biosynthesis; gluconeogenesis. It participates in carbohydrate degradation; glycolysis; D-glyceraldehyde 3-phosphate and glycerone phosphate from D-glucose: step 2/4. Functionally, catalyzes the reversible isomerization of glucose-6-phosphate to fructose-6-phosphate. This is Glucose-6-phosphate isomerase from Levilactobacillus brevis (strain ATCC 367 / BCRC 12310 / CIP 105137 / JCM 1170 / LMG 11437 / NCIMB 947 / NCTC 947) (Lactobacillus brevis).